The sequence spans 160 residues: Cytochrome c-type biogenesis protein CcmE (160 aa).

At Met1–Arg8 the chain is on the cytoplasmic side. Residues Leu9–Ala29 traverse the membrane as a helical; Signal-anchor for type II membrane protein segment. The Periplasmic portion of the chain corresponds to Leu30–Leu160. Heme-binding residues include His130 and Tyr134.

It belongs to the CcmE/CycJ family.

Its subcellular location is the cell inner membrane. Functionally, heme chaperone required for the biogenesis of c-type cytochromes. Transiently binds heme delivered by CcmC and transfers the heme to apo-cytochromes in a process facilitated by CcmF and CcmH. The chain is Cytochrome c-type biogenesis protein CcmE from Pectobacterium carotovorum subsp. carotovorum (strain PC1).